Consider the following 88-residue polypeptide: UPF0297 protein GTNG_2488 (88 aa).

This sequence belongs to the UPF0297 family.

The sequence is that of UPF0297 protein GTNG_2488 from Geobacillus thermodenitrificans (strain NG80-2).